Consider the following 481-residue polypeptide: RAC-beta serine/threonine-protein kinase (481 aa).

Position 1 is an N-acetylmethionine (methionine 1). Positions 5 to 108 (SVIKEGWLHK…WIRAIQMVAN (104 aa)) constitute a PH domain. Serine 34 carries the phosphoserine modification. A disulfide bridge links cysteine 60 with cysteine 77. A Phosphoserine modification is found at serine 126. 2 O-linked (GlcNAc) serine glycosylation sites follow: serine 128 and serine 131. The region spanning 152 to 409 (FDYLKLLGKG…AKEVMEHRFF (258 aa)) is the Protein kinase domain. ATP is bound by residues 158-166 (LGKGTFGKV) and lysine 181. Residue aspartate 275 is the Proton acceptor of the active site. 2 residues coordinate Mn(2+): asparagine 280 and aspartate 293. O-linked (GlcNAc) threonine glycosylation occurs at threonine 306. Residue threonine 309 is modified to Phosphothreonine; by PDPK1. The O-linked (GlcNAc) threonine glycan is linked to threonine 313. Residues 410–481 (LSINWQDVVQ…QFSYSASIRE (72 aa)) form the AGC-kinase C-terminal domain. The residue at position 447 (serine 447) is a Phosphoserine. A Phosphothreonine modification is found at threonine 451. 3 positions are modified to phosphoserine: serine 461, serine 474, and serine 478. A glycan (O-linked (GlcNAc) serine; alternate) is linked at serine 474.

Belongs to the protein kinase superfamily. AGC Ser/Thr protein kinase family. RAC subfamily. As to quaternary structure, interacts with BTBD10. Interacts with KCTD20. Interacts (via PH domain) with MTCP1, TCL1A and TCL1B; this interaction may facilitate AKT2 oligomerization and phosphorylation, hence increasing kinase activity. Interacts with PHB2; this interaction may be important for myogenic differentiation. Interacts (when phosphorylated) with CLIP3; this interaction promotes cell membrane localization. Interacts with WDFY2 (via WD repeats 1-3). Phosphorylation on Thr-309 and Ser-474 is required for full activity. Phosphorylation of the activation loop at Thr-309 by PDPK1/PDK1 is a prerequisite for full activation. Phosphorylated and activated by PDPK1/PDK1 in the presence of phosphatidylinositol 3,4,5-trisphosphate. Phosphorylation by mTORC2 in response to growth factors plays a key role in AKT1 activation: mTORC2 phosphorylates different sites depending on the context, such as Ser-474 or Ser-478, thereby facilitating subsequent phosphorylation of the activation loop by PDPK1/PDK1. In terms of processing, ubiquitinated; undergoes both 'Lys-48'- and 'Lys-63'-linked polyubiquitination. TRAF6-induced 'Lys-63'-linked AKT2 ubiquitination. When fully phosphorylated and translocated into the nucleus, undergoes 'Lys-48'-polyubiquitination catalyzed by TTC3, leading to its degradation by the proteasome. Post-translationally, O-GlcNAcylation at Thr-306 and Thr-313 inhibits activating phosphorylation at Thr-309 via disrupting the interaction between AKT and PDPK1/PDK1. As to expression, expressed in adipocytes and hepatocytes (at protein level). Expressed at low levels in skeletal muscle (at protein level).

The protein localises to the cytoplasm. The protein resides in the nucleus. It is found in the cell membrane. It localises to the early endosome. The catalysed reaction is L-seryl-[protein] + ATP = O-phospho-L-seryl-[protein] + ADP + H(+). It carries out the reaction L-threonyl-[protein] + ATP = O-phospho-L-threonyl-[protein] + ADP + H(+). Phosphorylation at Thr-309 (in the kinase domain) and Ser-474 (in the C-terminal regulatory region) is required for full activation. In adipocytes and hepatocytes, the activation is induced by insulin. AKT2 phosphorylation of PKP1 is induced by insulin. In terms of biological role, serine/threonine kinase closely related to AKT1 and AKT3. All 3 enzymes, AKT1, AKT2 and AKT3, are collectively known as AKT kinase. AKT regulates many processes including metabolism, proliferation, cell survival, growth and angiogenesis, through the phosphorylation of a range of downstream substrates. Over 100 substrates have been reported so far, although for most of them, the precise AKT kinase catalyzing the reaction was not specified. AKT regulates glucose uptake by mediating insulin-induced translocation of the SLC2A4/GLUT4 glucose transporter to the cell surface. Phosphorylation of PTPN1 at 'Ser-50' negatively modulates its phosphatase activity preventing dephosphorylation of the insulin receptor and the attenuation of insulin signaling. Phosphorylation of TBC1D4 triggers the binding of this effector to inhibitory 14-3-3 proteins, which is required for insulin-stimulated glucose transport. AKT also regulates the storage of glucose in the form of glycogen by phosphorylating GSK3A at 'Ser-21' and GSK3B at 'Ser-9', resulting in inhibition of its kinase activity. Phosphorylation of GSK3 isoforms by AKT is also thought to be one mechanism by which cell proliferation is driven. AKT also regulates cell survival via the phosphorylation of MAP3K5 (apoptosis signal-related kinase). Phosphorylation of 'Ser-83' decreases MAP3K5 kinase activity stimulated by oxidative stress and thereby prevents apoptosis. AKT mediates insulin-stimulated protein synthesis by phosphorylating TSC2 at 'Ser-939' and 'Thr-1462', thereby activating mTORC1 signaling and leading to both phosphorylation of 4E-BP1 and in activation of RPS6KB1. AKT is involved in the phosphorylation of members of the FOXO factors (Forkhead family of transcription factors), leading to binding of 14-3-3 proteins and cytoplasmic localization. In particular, FOXO1 is phosphorylated at 'Thr-24', 'Ser-256' and 'Ser-319'. FOXO3 and FOXO4 are phosphorylated on equivalent sites. AKT has an important role in the regulation of NF-kappa-B-dependent gene transcription and positively regulates the activity of CREB1 (cyclic AMP (cAMP)-response element binding protein). The phosphorylation of CREB1 induces the binding of accessory proteins that are necessary for the transcription of pro-survival genes such as BCL2 and MCL1. AKT phosphorylates 'Ser-454' on ATP citrate lyase (ACLY), thereby potentially regulating ACLY activity and fatty acid synthesis. Activates the 3B isoform of cyclic nucleotide phosphodiesterase (PDE3B) via phosphorylation of 'Ser-273', resulting in reduced cyclic AMP levels and inhibition of lipolysis. Phosphorylates PIKFYVE on 'Ser-318', which results in increased PI(3)P-5 activity. The Rho GTPase-activating protein DLC1 is another substrate and its phosphorylation is implicated in the regulation cell proliferation and cell growth. AKT plays a role as key modulator of the AKT-mTOR signaling pathway controlling the tempo of the process of newborn neurons integration during adult neurogenesis, including correct neuron positioning, dendritic development and synapse formation. Signals downstream of phosphatidylinositol 3-kinase (PI(3)K) to mediate the effects of various growth factors such as platelet-derived growth factor (PDGF), epidermal growth factor (EGF), insulin and insulin-like growth factor 1 (IGF1). AKT mediates the antiapoptotic effects of IGF1. Essential for the SPATA13-mediated regulation of cell migration and adhesion assembly and disassembly. May be involved in the regulation of the placental development. In response to lysophosphatidic acid stimulation, inhibits the ciliogenesis cascade. In this context, phosphorylates WDR44, hence stabilizing its interaction with Rab11 and preventing the formation of the ciliogenic Rab11-FIP3-RAB3IP complex. Also phosphorylates RAB3IP/Rabin8, thus may affect RAB3IP guanine nucleotide exchange factor (GEF) activity toward Rab8, which is important for cilia growth. Phosphorylates PKP1, facilitating its interaction with YWHAG and translocation to the nucleus, ultimately resulting in a reduction in keratinocyte intercellular adhesion. Phosphorylation of PKP1 increases PKP1 protein stability, translocation to the cytoplasm away from desmosome plaques and PKP1-driven cap-dependent translation. Its function is as follows. Several AKT2-specific substrates have been identified, including ANKRD2, C2CD5, CLK2 and PITX2. May play a role in myoblast differentiation. In this context, may act through PITX2 phosphorylation. Unphosphorylated PITX2 associates with an ELAVL1/HuR-containing complex, which stabilizes cyclin mRNA and ensuring cell proliferation. Phosphorylation by AKT2 impairs this association, leading to CCND1 mRNA destabilization and progression towards differentiation. Also involved in the negative regulation of myogenesis in response to stress conditions. In this context, acts by phosphorylating ANKRD2. May also be a key regulator of glucose uptake. Regulates insulin-stimulated glucose transport by the increase of glucose transporter GLUT4 translocation from intracellular stores to the plasma membrane. In this context, acts by phosphorylating C2CD5/CDP138 on 'Ser-197' in insulin-stimulated adipocytes. Through the phosphorylation of CLK2 on 'Thr-343', involved in insulin-regulated suppression of hepatic gluconeogenesis. This chain is RAC-beta serine/threonine-protein kinase, found in Rattus norvegicus (Rat).